The primary structure comprises 974 residues: Leucine-rich repeat receptor-like kinase protein SUNN (974 aa).

The signal sequence occupies residues 1–20 (MKNITCYLLLLCMLFTTCYS). Residues Asn75, Asn104, Asn123, and Asn136 are each glycosylated (N-linked (GlcNAc...) asparagine). LRR repeat units lie at residues 92-116 (LNMLESLTITMDNLTGELPTELSKL), 117-141 (TSLRILNISHNLFSGNFPGNITFGM), 143-165 (KLEALDAYDNNFEGPLPEEIVSL), 166-188 (MKLKYLSFAGNFFSGTIPESYSE), 189-213 (FQKLEILRLNYNSLTGKIPKSLSKL), 238-262 (IKSLRYLEISNANLTGEIPPSLGNL), 263-286 (ENLDSLFLQMNNLTGTIPPELSSM), 288-309 (SLMSLDLSINGLSGEIPETFSK), 310-334 (LKNLTLINFFQNKLRGSIPAFIGDL), 335-358 (PNLETLQVWENNFSFVLPQNLGSN), 360-382 (KFIYFDVTKNHLTGLIPPELCKS), 383-406 (KKLKTFIVTDNFFRGPIPNGIGPC), 407-430 (KSLEKIRVANNYLDGPVPPGIFQL), 431-454 (PSVQIIELGNNRFNGQLPTEISGN), 456-477 (LGNLALSNNLFTGRIPASMKNL), 478-501 (RSLQTLLLDANQFLGEIPAEVFAL), 503-525 (VLTRINISGNNLTGGIPKTVTQC), 527-549 (SLTAVDFSRNMLTGEVPKGMKNL), 550-573 (KVLSIFNVSHNSISGKIPDEIRFM), and 574-598 (TSLTTLDLSYNNFTGIVPTGGQFLV). Asn250 and Asn274 each carry an N-linked (GlcNAc...) asparagine glycan. Asn312 and Asn346 each carry an N-linked (GlcNAc...) asparagine glycan. 2 N-linked (GlcNAc...) asparagine glycosylation sites follow: Asn508 and Asn513. N-linked (GlcNAc...) asparagine glycans are attached at residues Asn556 and Asn585. A helical membrane pass occupies residues 635–655 (VVIAIVFATAVLMVIVTLHMM). Residues 685 to 972 (LKEENIIGKG…PPHSTSHNLI (288 aa)) form the Protein kinase domain. ATP-binding positions include 691 to 699 (IGKGGAGIV) and Lys713. Asp810 (proton acceptor) is an active-site residue.

This sequence belongs to the protein kinase superfamily. Ser/Thr protein kinase family. Expressed in roots and shoots. Expressed in the vasculature of leaves, petioles, stems and roots.

Its subcellular location is the cell membrane. It carries out the reaction L-seryl-[protein] + ATP = O-phospho-L-seryl-[protein] + ADP + H(+). The catalysed reaction is L-threonyl-[protein] + ATP = O-phospho-L-threonyl-[protein] + ADP + H(+). In terms of biological role, LRR receptor kinase involved in the regulation of root growth and root nodule organogenesis. Involved in long distance nodulation signaling events. Involved in the autoregulation of nodulation (AON), a long distance systemic signaling from root to shoot and back again, which allows legumes to limit the number of root nodules formed based on available nitrogen and previous rhizobial colonization. Acts from shoot to root to control AON. Interacts with CLE12 and CLE13 signaling to control nodule numbers. Required for the modulation of shoot-to-root auxin transport in response to altered nitrogen tissue concentrations and in the absence of rhizobia. Shoot-to-root auxin transport influences lateral root density and length. Involved in the regulation of root colonization by arbuscular mycorrhizal (AM) fungi. Interacts with CLE33 and CL53 signaling to repress strigolactone biosynthetic genes and strigolactone content in the roots, and consequently reduces the promotion of further colonization by AM fungi. In Medicago truncatula (Barrel medic), this protein is Leucine-rich repeat receptor-like kinase protein SUNN.